The sequence spans 159 residues: Large ribosomal subunit protein uL13 (159 aa).

This sequence belongs to the universal ribosomal protein uL13 family. In terms of assembly, part of the 50S ribosomal subunit.

In terms of biological role, this protein is one of the early assembly proteins of the 50S ribosomal subunit, although it is not seen to bind rRNA by itself. It is important during the early stages of 50S assembly. The polypeptide is Large ribosomal subunit protein uL13 (Methanopyrus kandleri (strain AV19 / DSM 6324 / JCM 9639 / NBRC 100938)).